A 185-amino-acid chain; its full sequence is Ribosome-recycling factor (185 aa).

Residues Glu-138–Gln-157 form a disordered region.

It belongs to the RRF family.

The protein localises to the cytoplasm. In terms of biological role, responsible for the release of ribosomes from messenger RNA at the termination of protein biosynthesis. May increase the efficiency of translation by recycling ribosomes from one round of translation to another. The polypeptide is Ribosome-recycling factor (Desulfitobacterium hafniense (strain DSM 10664 / DCB-2)).